The primary structure comprises 136 residues: Large-conductance mechanosensitive channel (136 aa).

The next 2 membrane-spanning stretches (helical) occupy residues 9–29 (AFAS…GAAF) and 79–99 (IQTI…LKAI).

This sequence belongs to the MscL family. As to quaternary structure, homopentamer.

Its subcellular location is the cell inner membrane. Functionally, channel that opens in response to stretch forces in the membrane lipid bilayer. May participate in the regulation of osmotic pressure changes within the cell. The sequence is that of Large-conductance mechanosensitive channel from Shewanella sp. (strain ANA-3).